A 37-amino-acid chain; its full sequence is Large ribosomal subunit protein bL36 (37 aa).

The protein belongs to the bacterial ribosomal protein bL36 family.

The protein is Large ribosomal subunit protein bL36 of Trichodesmium erythraeum (strain IMS101).